The primary structure comprises 353 residues: Quinolinate synthase (353 aa).

Positions 47 and 68 each coordinate iminosuccinate. Residue C113 participates in [4Fe-4S] cluster binding. Residues 139-141 and S156 each bind iminosuccinate; that span reads YAN. C200 contacts [4Fe-4S] cluster. Residues 226-228 and T243 each bind iminosuccinate; that span reads HPE. C297 contacts [4Fe-4S] cluster.

This sequence belongs to the quinolinate synthase family. Type 1 subfamily. It depends on [4Fe-4S] cluster as a cofactor.

The protein resides in the cytoplasm. The enzyme catalyses iminosuccinate + dihydroxyacetone phosphate = quinolinate + phosphate + 2 H2O + H(+). It participates in cofactor biosynthesis; NAD(+) biosynthesis; quinolinate from iminoaspartate: step 1/1. Its function is as follows. Catalyzes the condensation of iminoaspartate with dihydroxyacetone phosphate to form quinolinate. In Vibrio vulnificus (strain CMCP6), this protein is Quinolinate synthase.